The sequence spans 317 residues: N(5)-(carboxyethyl)ornithine synthase (317 aa).

Positions 15, 71, and 92 each coordinate pyruvate. 172 to 177 contributes to the NADP(+) binding site; that stretch reads GSGNVS.

The protein belongs to the AlaDH/PNT family. CEOS subfamily. As to quaternary structure, homotetramer.

The catalysed reaction is N(5)-[1(S)-1-carboxyethyl]-L-ornithine + NADP(+) + H2O = L-ornithine + pyruvate + NADPH + H(+). Functionally, catalyzes the NADPH-dependent reductive condensation between pyruvic acid and the side chain amino group of L-ornithine to form N(5)-(L-1-carboxyethyl)-L-ornithine. To a lesser extent, can also use L-lysine as substrate (yielding N(6)-(L-1-carboxyethyl)-L-lysine), and the D-isomers of the 2 basic amino acids. Can use alpha-keto acids other than pyruvate, e.g. glyoxylate. This Clostridium botulinum (strain Hall / ATCC 3502 / NCTC 13319 / Type A) protein is N(5)-(carboxyethyl)ornithine synthase (ceo).